The chain runs to 189 residues: Small ribosomal subunit protein uS7 (189 aa).

Belongs to the universal ribosomal protein uS7 family. Component of the small ribosomal subunit.

The protein resides in the cytoplasm. The chain is Small ribosomal subunit protein uS7 (RPS5) from Encephalitozoon cuniculi (strain GB-M1) (Microsporidian parasite).